Here is a 244-residue protein sequence, read N- to C-terminus: Octanoyltransferase (244 aa).

The interval 1–21 (MDKKLHSVSPESGPNSNLDLT) is disordered. Over residues 9 to 21 (SPESGPNSNLDLT) the composition is skewed to polar residues. One can recognise a BPL/LPL catalytic domain in the interval 59–244 (PFSPQAVWLL…LNWEKINQSL (186 aa)). Substrate contacts are provided by residues 101-108 (RGGEVTHH), 168-170 (SIG), and 181-183 (GFS). C199 functions as the Acyl-thioester intermediate in the catalytic mechanism.

Belongs to the LipB family.

It is found in the cytoplasm. The catalysed reaction is octanoyl-[ACP] + L-lysyl-[protein] = N(6)-octanoyl-L-lysyl-[protein] + holo-[ACP] + H(+). Its pathway is protein modification; protein lipoylation via endogenous pathway; protein N(6)-(lipoyl)lysine from octanoyl-[acyl-carrier-protein]: step 1/2. Its function is as follows. Catalyzes the transfer of endogenously produced octanoic acid from octanoyl-acyl-carrier-protein onto the lipoyl domains of lipoate-dependent enzymes. Lipoyl-ACP can also act as a substrate although octanoyl-ACP is likely to be the physiological substrate. This chain is Octanoyltransferase, found in Prochlorococcus marinus (strain NATL1A).